A 142-amino-acid polypeptide reads, in one-letter code: Large ribosomal subunit protein uL11 (142 aa).

This sequence belongs to the universal ribosomal protein uL11 family. Part of the ribosomal stalk of the 50S ribosomal subunit. Interacts with L10 and the large rRNA to form the base of the stalk. L10 forms an elongated spine to which L12 dimers bind in a sequential fashion forming a multimeric L10(L12)X complex. One or more lysine residues are methylated.

Functionally, forms part of the ribosomal stalk which helps the ribosome interact with GTP-bound translation factors. This Aeromonas hydrophila subsp. hydrophila (strain ATCC 7966 / DSM 30187 / BCRC 13018 / CCUG 14551 / JCM 1027 / KCTC 2358 / NCIMB 9240 / NCTC 8049) protein is Large ribosomal subunit protein uL11.